We begin with the raw amino-acid sequence, 327 residues long: Ribosomal RNA small subunit methyltransferase H (327 aa).

S-adenosyl-L-methionine-binding positions include 36 to 38 (GGH), D61, F88, D114, and Q121.

Belongs to the methyltransferase superfamily. RsmH family.

Its subcellular location is the cytoplasm. The catalysed reaction is cytidine(1402) in 16S rRNA + S-adenosyl-L-methionine = N(4)-methylcytidine(1402) in 16S rRNA + S-adenosyl-L-homocysteine + H(+). Functionally, specifically methylates the N4 position of cytidine in position 1402 (C1402) of 16S rRNA. This is Ribosomal RNA small subunit methyltransferase H from Chlorobium luteolum (strain DSM 273 / BCRC 81028 / 2530) (Pelodictyon luteolum).